The primary structure comprises 242 residues: Ribonuclease PH (242 aa).

Phosphate-binding positions include Arg90 and 128-130 (GTR).

The protein belongs to the RNase PH family. As to quaternary structure, homohexameric ring arranged as a trimer of dimers.

It catalyses the reaction tRNA(n+1) + phosphate = tRNA(n) + a ribonucleoside 5'-diphosphate. Functionally, phosphorolytic 3'-5' exoribonuclease that plays an important role in tRNA 3'-end maturation. Removes nucleotide residues following the 3'-CCA terminus of tRNAs; can also add nucleotides to the ends of RNA molecules by using nucleoside diphosphates as substrates, but this may not be physiologically important. Probably plays a role in initiation of 16S rRNA degradation (leading to ribosome degradation) during starvation. The protein is Ribonuclease PH of Nocardioides sp. (strain ATCC BAA-499 / JS614).